A 224-amino-acid polypeptide reads, in one-letter code: Cerebellin-2 (224 aa).

Positions 1–51 (MQAPGRGPLGLRLMMPGRRGALREPGGCGSCLGVALALLLLLLPACCPVRA) are cleaved as a signal peptide. Residues N53 and N110 are each glycosylated (N-linked (GlcNAc...) asparagine). A C1q domain is found at 88 to 224 (SGSAKVAFSA…TFSGFLVFPL (137 aa)).

As to quaternary structure, homohexamer; disulfide-linked homotrimers. The trimers are assembled via the globular C1q domains. The trimers associate via N-terminal cysteine residues to form disulfide-linked hexamers. May form homooligomers or heterooligomers with CBLN1 and CBLN3 prior to secretion. Once secreted, does not interact with other CBLN family members. Interacts with GRID2, and more weakly with GRID1. Interacts with NRXN1 and NRXN2 long and short isoforms produced by alternative promoter usage. Weakly interacts with NRXN3 short isoform and not at all with NRXN3 long isoform.

It is found in the secreted. Functionally, acts as a synaptic organizer in specific subsets of neurons in the brain. Essential for long-term maintenance but not establishment of excitatory synapses. Functions as part of a trans-synaptic complex by binding to postsynaptic GRID1 and presynaptic neurexins. This interaction helps regulate the activity of NMDA and AMPA receptors at hippocampal synapses without affecting synapse formation. NRXN1B-CBLN2-GRID1 complex transduce presynaptic signals into postsynaptic NMDAR response. NRXN3B-CBLN2-GRID1 complex transduce presynaptic signals into postsynaptic AMPAR response. The polypeptide is Cerebellin-2 (Homo sapiens (Human)).